Reading from the N-terminus, the 89-residue chain is UPF0298 protein GK1096 (89 aa).

Belongs to the UPF0298 family.

Its subcellular location is the cytoplasm. In Geobacillus kaustophilus (strain HTA426), this protein is UPF0298 protein GK1096.